Reading from the N-terminus, the 341-residue chain is L-threonine 3-dehydrogenase (341 aa).

Cysteine 38 contributes to the Zn(2+) binding site. Catalysis depends on charge relay system residues threonine 40 and histidine 43. Residues histidine 63, glutamate 64, cysteine 93, cysteine 96, cysteine 99, and cysteine 107 each coordinate Zn(2+). NAD(+)-binding positions include isoleucine 175, aspartate 195, arginine 200, 262–264 (LGI), and 286–287 (IY).

This sequence belongs to the zinc-containing alcohol dehydrogenase family. Homotetramer. Zn(2+) serves as cofactor.

It localises to the cytoplasm. The enzyme catalyses L-threonine + NAD(+) = (2S)-2-amino-3-oxobutanoate + NADH + H(+). The protein operates within amino-acid degradation; L-threonine degradation via oxydo-reductase pathway; glycine from L-threonine: step 1/2. Catalyzes the NAD(+)-dependent oxidation of L-threonine to 2-amino-3-ketobutyrate. This Serratia proteamaculans (strain 568) protein is L-threonine 3-dehydrogenase.